The following is a 686-amino-acid chain: Tripartite terminase subunit 3 (686 aa).

The short motif at 219–226 is the Walker A motif element; it reads IPRRHGKT. The Walker B motif signature appears at 314–319; the sequence is LLYVDE. The For ATPase activity role is filled by E319. Catalysis depends on for nuclease activity residues D475, E548, and D660.

This sequence belongs to the herpesviridae TRM3 protein family. In terms of assembly, interacts with the terminase subunits TRM1 and TRM2. Interacts with portal protein.

The protein resides in the host nucleus. In terms of biological role, component of the molecular motor that translocates viral genomic DNA in empty capsid during DNA packaging. Forms a tripartite terminase complex together with TRM1 and TRM2 in the host cytoplasm. Once the complex reaches the host nucleus, it interacts with the capsid portal vertex. This portal forms a ring in which genomic DNA is translocated into the capsid. TRM3 carries an RNase H-like nuclease activity that plays an important role for the cleavage of concatemeric viral DNA into unit length genomes. The polypeptide is Tripartite terminase subunit 3 (Equine herpesvirus 2 (strain 86/87) (EHV-2)).